Reading from the N-terminus, the 120-residue chain is NAD(P)H-quinone oxidoreductase subunit 3, chloroplastic (120 aa).

Transmembrane regions (helical) follow at residues 7–27, 64–84, and 89–109; these read YQTF…ALLI, SFAL…PWAM, and LGIF…IGLV.

The protein belongs to the complex I subunit 3 family. In terms of assembly, NDH is composed of at least 16 different subunits, 5 of which are encoded in the nucleus.

The protein resides in the plastid. It localises to the chloroplast thylakoid membrane. The catalysed reaction is a plastoquinone + NADH + (n+1) H(+)(in) = a plastoquinol + NAD(+) + n H(+)(out). The enzyme catalyses a plastoquinone + NADPH + (n+1) H(+)(in) = a plastoquinol + NADP(+) + n H(+)(out). Functionally, NDH shuttles electrons from NAD(P)H:plastoquinone, via FMN and iron-sulfur (Fe-S) centers, to quinones in the photosynthetic chain and possibly in a chloroplast respiratory chain. The immediate electron acceptor for the enzyme in this species is believed to be plastoquinone. Couples the redox reaction to proton translocation, and thus conserves the redox energy in a proton gradient. In Psilotum nudum (Whisk fern), this protein is NAD(P)H-quinone oxidoreductase subunit 3, chloroplastic.